The chain runs to 490 residues: 7-ethoxycoumarin O-deethylase (490 aa).

Cys432 is a binding site for heme.

Belongs to the cytochrome P450 family. It depends on heme as a cofactor.

Functionally, capable of dealkylating a model xenobiotic compound, 7-ethoxycoumarin. Metabolizes with high efficiency a wide range of xenobiotics, including alkoxycoumarins, alkoxyresorufins, and several herbicides of the class of phenylureas. Catalyzes the double N-dealkylation (oxidative N-demethylation) of phenylureas such as chlortoluron and isoproturon with turnover rates comparable to those reported for physiological substrates and produces non-phytotoxic compounds. Could be used for control of herbicide tolerance and selectivity, as well as soil and groundwater bioremediation. The polypeptide is 7-ethoxycoumarin O-deethylase (CYP76B1) (Helianthus tuberosus (Jerusalem artichoke)).